Consider the following 158-residue polypeptide: Dysbindin domain-containing protein 1 (158 aa).

Disordered stretches follow at residues Met-1–Pro-50 and Ala-93–Asp-158. Ser-95 and Ser-119 each carry phosphoserine. Residues Thr-125–Arg-141 are compositionally biased toward basic and acidic residues.

This sequence belongs to the dysbindin family.

This is Dysbindin domain-containing protein 1 (DBNDD1) from Homo sapiens (Human).